We begin with the raw amino-acid sequence, 35 residues long: Dolichyl-diphosphooligosaccharide--protein glycosyltransferase subunit 4B (35 aa).

At 1–8 (MFDDQDLG) the chain is on the lumenal side. Residues 9–29 (FFANFLGIFIFIMVIAYHFVV) form a helical membrane-spanning segment. At 30–35 (AEPKFE) the chain is on the cytoplasmic side.

It belongs to the OST4 family. In terms of assembly, component of the oligosaccharyltransferase (OST) complex.

It localises to the endoplasmic reticulum membrane. In terms of biological role, subunit of the oligosaccharyl transferase (OST) complex that catalyzes the initial transfer of a defined glycan (Glc(3)Man(9)GlcNAc(2) in eukaryotes) from the lipid carrier dolichol-pyrophosphate to an asparagine residue within an Asn-X-Ser/Thr consensus motif in nascent polypeptide chains, the first step in protein N-glycosylation. N-glycosylation occurs cotranslationally and the complex associates with the Sec61 complex at the channel-forming translocon complex that mediates protein translocation across the endoplasmic reticulum (ER). All subunits are required for a maximal enzyme activity. In Arabidopsis thaliana (Mouse-ear cress), this protein is Dolichyl-diphosphooligosaccharide--protein glycosyltransferase subunit 4B (OST4B).